A 378-amino-acid chain; its full sequence is uncharacterized protein (378 aa).

Residues 1-11 (MSQQTTPAEQK) are compositionally biased toward polar residues. Residues 1 to 33 (MSQQTTPAEQKSLQRKKPPFRADQVGSLLRSEP) are disordered.

This sequence to B.subtilis YxjH.

This is an uncharacterized protein from Bacillus subtilis (strain 168).